The following is a 206-amino-acid chain: Large ribosomal subunit protein uL4 (206 aa).

The segment covering 65-76 has biased composition (basic residues); the sequence is KQKGTGRARHSS. Positions 65-94 are disordered; sequence KQKGTGRARHSSARAPQFRGGGKAHGPVVR.

This sequence belongs to the universal ribosomal protein uL4 family. As to quaternary structure, part of the 50S ribosomal subunit.

In terms of biological role, one of the primary rRNA binding proteins, this protein initially binds near the 5'-end of the 23S rRNA. It is important during the early stages of 50S assembly. It makes multiple contacts with different domains of the 23S rRNA in the assembled 50S subunit and ribosome. Its function is as follows. Forms part of the polypeptide exit tunnel. The polypeptide is Large ribosomal subunit protein uL4 (Bartonella quintana (strain Toulouse) (Rochalimaea quintana)).